Reading from the N-terminus, the 278-residue chain is Ribosomal RNA small subunit methyltransferase J (278 aa).

S-adenosyl-L-methionine is bound by residues 143–144 (ER) and aspartate 197.

Belongs to the methyltransferase superfamily. RsmJ family.

Its subcellular location is the cytoplasm. It catalyses the reaction guanosine(1516) in 16S rRNA + S-adenosyl-L-methionine = N(2)-methylguanosine(1516) in 16S rRNA + S-adenosyl-L-homocysteine + H(+). Functionally, specifically methylates the guanosine in position 1516 of 16S rRNA. The polypeptide is Ribosomal RNA small subunit methyltransferase J (Marinobacter nauticus (strain ATCC 700491 / DSM 11845 / VT8) (Marinobacter aquaeolei)).